The primary structure comprises 414 residues: Esterase FrsA (414 aa).

Belongs to the FrsA family.

The enzyme catalyses a carboxylic ester + H2O = an alcohol + a carboxylate + H(+). In terms of biological role, catalyzes the hydrolysis of esters. This is Esterase FrsA from Escherichia coli O81 (strain ED1a).